Reading from the N-terminus, the 205-residue chain is Holliday junction branch migration complex subunit RuvA (205 aa).

A domain I region spans residues 1-63 (MIDFVEGTLS…EDAILLYGFA (63 aa)). The segment at 64–142 (TRDERDLFRK…GYTPSAILTV (79 aa)) is domain II. A flexible linker region spans residues 143–153 (AAGDLTAGEQA). The tract at residues 153–205 (AVSALNEALDALTALGYSDGELQKIRNTLSEKSKEGDGVEKLIKQGLALLMRG) is domain III.

The protein belongs to the RuvA family. As to quaternary structure, homotetramer. Forms an RuvA(8)-RuvB(12)-Holliday junction (HJ) complex. HJ DNA is sandwiched between 2 RuvA tetramers; dsDNA enters through RuvA and exits via RuvB. An RuvB hexamer assembles on each DNA strand where it exits the tetramer. Each RuvB hexamer is contacted by two RuvA subunits (via domain III) on 2 adjacent RuvB subunits; this complex drives branch migration. In the full resolvosome a probable DNA-RuvA(4)-RuvB(12)-RuvC(2) complex forms which resolves the HJ.

The protein resides in the cytoplasm. Its function is as follows. The RuvA-RuvB-RuvC complex processes Holliday junction (HJ) DNA during genetic recombination and DNA repair, while the RuvA-RuvB complex plays an important role in the rescue of blocked DNA replication forks via replication fork reversal (RFR). RuvA specifically binds to HJ cruciform DNA, conferring on it an open structure. The RuvB hexamer acts as an ATP-dependent pump, pulling dsDNA into and through the RuvAB complex. HJ branch migration allows RuvC to scan DNA until it finds its consensus sequence, where it cleaves and resolves the cruciform DNA. This chain is Holliday junction branch migration complex subunit RuvA, found in Brevibacillus brevis (strain 47 / JCM 6285 / NBRC 100599).